The chain runs to 151 residues: Putative phosphatidylglycerol/phosphatidylinositol transfer protein 1 (151 aa).

The N-terminal stretch at 1–26 (MKHSKNQIVYITFFIIILIVVKPIES) is a signal peptide.

The protein belongs to the NPC2 family. In terms of assembly, monomer.

In terms of biological role, catalyzes the intermembrane transfer of phosphatidylglycerol and phosphatidylinositol. The polypeptide is Putative phosphatidylglycerol/phosphatidylinositol transfer protein 1 (Dictyostelium discoideum (Social amoeba)).